The primary structure comprises 372 residues: Cytoplasmic tRNA 2-thiolation protein 1 (372 aa).

Positions 335 to 372 (GKKEDGGCGSGGGGCGCAGAADETENEETRKRLKDLQF) are disordered. Positions 341–351 (GCGSGGGGCGC) are enriched in gly residues. Positions 361–372 (EETRKRLKDLQF) are enriched in basic and acidic residues.

The protein belongs to the TtcA family. CTU1/NCS6/ATPBD3 subfamily.

The protein resides in the cytoplasm. Its pathway is tRNA modification; 5-methoxycarbonylmethyl-2-thiouridine-tRNA biosynthesis. Functionally, plays a central role in 2-thiolation of mcm(5)S(2)U at tRNA wobble positions of tRNA(Lys), tRNA(Glu) and tRNA(Gln). Directly binds tRNAs and probably acts by catalyzing adenylation of tRNAs, an intermediate required for 2-thiolation. It is unclear whether it acts as a sulfurtransferase that transfers sulfur from thiocarboxylated URM1 onto the uridine of tRNAs at wobble position. This Caenorhabditis briggsae protein is Cytoplasmic tRNA 2-thiolation protein 1.